A 228-amino-acid polypeptide reads, in one-letter code: Cytidylate kinase (228 aa).

ATP is bound at residue 17–25 (GPTASGKGT).

The protein belongs to the cytidylate kinase family. Type 1 subfamily.

It is found in the cytoplasm. It catalyses the reaction CMP + ATP = CDP + ADP. The enzyme catalyses dCMP + ATP = dCDP + ADP. This chain is Cytidylate kinase, found in Burkholderia multivorans (strain ATCC 17616 / 249).